A 398-amino-acid chain; its full sequence is Elongation factor Tu (398 aa).

Positions Lys10 to Glu207 constitute a tr-type G domain. A G1 region spans residues Gly19–Thr26. Gly19–Thr26 serves as a coordination point for GTP. Mg(2+) is bound at residue Thr26. Residues Gly63 to Asn67 are G2. The interval Asp84–Gly87 is G3. Residues Asp84–His88 and Asn139–Asp142 each bind GTP. The tract at residues Asn139–Asp142 is G4. The tract at residues Ser177–Leu179 is G5.

The protein belongs to the TRAFAC class translation factor GTPase superfamily. Classic translation factor GTPase family. EF-Tu/EF-1A subfamily. In terms of assembly, monomer.

The protein resides in the cytoplasm. It carries out the reaction GTP + H2O = GDP + phosphate + H(+). Its function is as follows. GTP hydrolase that promotes the GTP-dependent binding of aminoacyl-tRNA to the A-site of ribosomes during protein biosynthesis. The polypeptide is Elongation factor Tu (Streptococcus equi subsp. zooepidemicus (strain MGCS10565)).